The sequence spans 130 residues: Glycine cleavage system H protein (130 aa).

Positions 25 to 106 (VALIGITDFA…PFDTWMVKLK (82 aa)) constitute a Lipoyl-binding domain. Lys66 carries the post-translational modification N6-lipoyllysine.

The protein belongs to the GcvH family. The glycine cleavage system is composed of four proteins: P, T, L and H. The cofactor is (R)-lipoate.

The glycine cleavage system catalyzes the degradation of glycine. The H protein shuttles the methylamine group of glycine from the P protein to the T protein. In Leptospira biflexa serovar Patoc (strain Patoc 1 / Ames), this protein is Glycine cleavage system H protein.